The sequence spans 66 residues: Phylloseptin-Az3 (66 aa).

The signal sequence occupies residues 1–22 (MAFLKKSLFLVLFLGLVSLSIC). The propeptide occupies 23–44 (EEEKRETEEEEYNQEDDDKSEE). F65 carries the phenylalanine amide modification.

Expressed by the skin glands.

It is found in the secreted. Its function is as follows. Has antimicrobial activity. The sequence is that of Phylloseptin-Az3 from Pithecopus azureus (Orange-legged monkey tree frog).